The primary structure comprises 692 residues: Elongation factor G (692 aa).

The 275-residue stretch at 8–282 (ENTRNIGIMA…AVIDYLPSPL (275 aa)) folds into the tr-type G domain. Residues 17 to 24 (AHIDAGKT), 81 to 85 (DTPGH), and 135 to 138 (NKMD) contribute to the GTP site.

The protein belongs to the TRAFAC class translation factor GTPase superfamily. Classic translation factor GTPase family. EF-G/EF-2 subfamily.

It is found in the cytoplasm. Catalyzes the GTP-dependent ribosomal translocation step during translation elongation. During this step, the ribosome changes from the pre-translocational (PRE) to the post-translocational (POST) state as the newly formed A-site-bound peptidyl-tRNA and P-site-bound deacylated tRNA move to the P and E sites, respectively. Catalyzes the coordinated movement of the two tRNA molecules, the mRNA and conformational changes in the ribosome. The chain is Elongation factor G from Bacillus cereus (strain ATCC 14579 / DSM 31 / CCUG 7414 / JCM 2152 / NBRC 15305 / NCIMB 9373 / NCTC 2599 / NRRL B-3711).